We begin with the raw amino-acid sequence, 243 residues long: DNA repair protein RecO (243 aa).

This sequence belongs to the RecO family.

In terms of biological role, involved in DNA repair and RecF pathway recombination. The polypeptide is DNA repair protein RecO (Serratia proteamaculans (strain 568)).